Here is a 396-residue protein sequence, read N- to C-terminus: L-lactate dehydrogenase (396 aa).

One can recognise an FMN hydroxy acid dehydrogenase domain in the interval 1–380; that stretch reads MIISAASDYR…SGDSLVQELG (380 aa). Substrate is bound at residue Tyr-24. 2 residues coordinate FMN: Ser-106 and Gln-127. Substrate is bound at residue Tyr-129. Residue Thr-155 participates in FMN binding. Substrate is bound at residue Arg-164. Lys-251 serves as a coordination point for FMN. The active-site Proton acceptor is the His-275. Residue Arg-278 participates in substrate binding. 306–330 provides a ligand contact to FMN; the sequence is DSGIRNGLDVVRMIALGADTVLLGR.

The protein belongs to the FMN-dependent alpha-hydroxy acid dehydrogenase family. It depends on FMN as a cofactor.

It localises to the cell inner membrane. The enzyme catalyses (S)-lactate + A = pyruvate + AH2. Functionally, catalyzes the conversion of L-lactate to pyruvate. Is coupled to the respiratory chain. In Salmonella enteritidis PT4 (strain P125109), this protein is L-lactate dehydrogenase.